We begin with the raw amino-acid sequence, 154 residues long: Protein FAM162A (154 aa).

The tract at residues 76-102 (RFKKEDEIPETVSLEMLDTAKNKMRVK) is required for proapoptotic activity. The helical transmembrane segment at 103–120 (ISYLMIALTVVGCICMVI) threads the bilayer.

This sequence belongs to the UPF0389 family. Interacts with HSP90AB1; HSP90AB1 is essential for FAM162A mitochondrial localization and pro-apoptotic activity. Interacts with VDAC2; the interaction is probably involved in inducing mitochondrial permeability transition.

It localises to the mitochondrion membrane. Its function is as follows. Proposed to be involved in regulation of apoptosis; the exact mechanism may differ between cell types/tissues. May be involved in hypoxia-induced cell death of transformed cells implicating cytochrome C release and caspase activation (such as CASP9) and inducing mitochondrial permeability transition. May be involved in hypoxia-induced cell death of neuronal cells probably by promoting release of AIFM1 from mitochondria to cytoplasm and its translocation to the nucleus; however, the involvement of caspases has been reported conflictingly. This is Protein FAM162A (FAM162A) from Pongo abelii (Sumatran orangutan).